The following is a 162-amino-acid chain: Putative ethylene-responsive transcription factor ERF121 (162 aa).

Disordered stretches follow at residues 1-21 (MDYS…PPNL), 84-103 (IKQE…KWSA), and 139-162 (KRSA…GGDD). Residues 87-98 (EKKHKGVRKKPS) show a composition bias toward basic residues. Residues 89–146 (KHKGVRKKPSGKWSAEIWDPSTRTRRWLGTFPTAEMAADAYDEAAAALVEKRSARRGS) constitute a DNA-binding region (AP2/ERF).

It belongs to the AP2/ERF transcription factor family. ERF subfamily.

The protein localises to the nucleus. Probably acts as a transcriptional activator. Binds to the GCC-box pathogenesis-related promoter element. May be involved in the regulation of gene expression by stress factors and by components of stress signal transduction pathways. In Arabidopsis thaliana (Mouse-ear cress), this protein is Putative ethylene-responsive transcription factor ERF121 (ERF121).